A 365-amino-acid chain; its full sequence is UDP-N-acetylglucosamine--N-acetylmuramyl-(pentapeptide) pyrophosphoryl-undecaprenol N-acetylglucosamine transferase (365 aa).

UDP-N-acetyl-alpha-D-glucosamine-binding positions include 13–15 (TGG), asparagine 125, arginine 165, serine 192, and glutamine 293.

The protein belongs to the glycosyltransferase 28 family. MurG subfamily.

It localises to the cell inner membrane. The enzyme catalyses di-trans,octa-cis-undecaprenyl diphospho-N-acetyl-alpha-D-muramoyl-L-alanyl-D-glutamyl-meso-2,6-diaminopimeloyl-D-alanyl-D-alanine + UDP-N-acetyl-alpha-D-glucosamine = di-trans,octa-cis-undecaprenyl diphospho-[N-acetyl-alpha-D-glucosaminyl-(1-&gt;4)]-N-acetyl-alpha-D-muramoyl-L-alanyl-D-glutamyl-meso-2,6-diaminopimeloyl-D-alanyl-D-alanine + UDP + H(+). It functions in the pathway cell wall biogenesis; peptidoglycan biosynthesis. Its function is as follows. Cell wall formation. Catalyzes the transfer of a GlcNAc subunit on undecaprenyl-pyrophosphoryl-MurNAc-pentapeptide (lipid intermediate I) to form undecaprenyl-pyrophosphoryl-MurNAc-(pentapeptide)GlcNAc (lipid intermediate II). The chain is UDP-N-acetylglucosamine--N-acetylmuramyl-(pentapeptide) pyrophosphoryl-undecaprenol N-acetylglucosamine transferase from Ruegeria sp. (strain TM1040) (Silicibacter sp.).